The chain runs to 96 residues: uncharacterized protein (96 aa).

This is an uncharacterized protein from Methanocaldococcus jannaschii (strain ATCC 43067 / DSM 2661 / JAL-1 / JCM 10045 / NBRC 100440) (Methanococcus jannaschii).